The primary structure comprises 312 residues: Pyrimidine-specific ribonucleoside hydrolase RihA (312 aa).

Residue His-240 is part of the active site.

This sequence belongs to the IUNH family. RihA subfamily.

Functionally, hydrolyzes cytidine or uridine to ribose and cytosine or uracil, respectively. In Shewanella woodyi (strain ATCC 51908 / MS32), this protein is Pyrimidine-specific ribonucleoside hydrolase RihA.